A 141-amino-acid polypeptide reads, in one-letter code: Nucleoside diphosphate kinase (141 aa).

Positions 9, 57, 85, 91, 102, and 112 each coordinate ATP. Residue His-115 is the Pros-phosphohistidine intermediate of the active site.

It belongs to the NDK family. In terms of assembly, homotetramer. It depends on Mg(2+) as a cofactor.

The protein resides in the cytoplasm. It carries out the reaction a 2'-deoxyribonucleoside 5'-diphosphate + ATP = a 2'-deoxyribonucleoside 5'-triphosphate + ADP. The enzyme catalyses a ribonucleoside 5'-diphosphate + ATP = a ribonucleoside 5'-triphosphate + ADP. Major role in the synthesis of nucleoside triphosphates other than ATP. The ATP gamma phosphate is transferred to the NDP beta phosphate via a ping-pong mechanism, using a phosphorylated active-site intermediate. This chain is Nucleoside diphosphate kinase, found in Chloroherpeton thalassium (strain ATCC 35110 / GB-78).